Consider the following 453-residue polypeptide: tRNA modification GTPase MnmE (453 aa).

Arg22, Glu79, and Lys119 together coordinate (6S)-5-formyl-5,6,7,8-tetrahydrofolate. A TrmE-type G domain is found at Gly215–Gly376. A K(+)-binding site is contributed by Asn225. GTP contacts are provided by residues Asn225–Ser230, Thr244–Thr250, Asp269–Gly272, and Asn334–Asp337. Ser229 provides a ligand contact to Mg(2+). 3 residues coordinate K(+): Thr244, Ile246, and Thr249. Thr250 contacts Mg(2+). Lys453 provides a ligand contact to (6S)-5-formyl-5,6,7,8-tetrahydrofolate.

It belongs to the TRAFAC class TrmE-Era-EngA-EngB-Septin-like GTPase superfamily. TrmE GTPase family. As to quaternary structure, homodimer. Heterotetramer of two MnmE and two MnmG subunits. K(+) serves as cofactor.

It is found in the cytoplasm. Exhibits a very high intrinsic GTPase hydrolysis rate. Involved in the addition of a carboxymethylaminomethyl (cmnm) group at the wobble position (U34) of certain tRNAs, forming tRNA-cmnm(5)s(2)U34. The sequence is that of tRNA modification GTPase MnmE from Shewanella woodyi (strain ATCC 51908 / MS32).